The primary structure comprises 170 residues: ATP synthase subunit b (170 aa).

Residues 30-50 form a helical membrane-spanning segment; that stretch reads FFFVLAIFLVVLAVIGTFVVP.

This sequence belongs to the ATPase B chain family. In terms of assembly, F-type ATPases have 2 components, F(1) - the catalytic core - and F(0) - the membrane proton channel. F(1) has five subunits: alpha(3), beta(3), gamma(1), delta(1), epsilon(1). F(0) has three main subunits: a(1), b(2) and c(10-14). The alpha and beta chains form an alternating ring which encloses part of the gamma chain. F(1) is attached to F(0) by a central stalk formed by the gamma and epsilon chains, while a peripheral stalk is formed by the delta and b chains.

The protein resides in the cell membrane. In terms of biological role, f(1)F(0) ATP synthase produces ATP from ADP in the presence of a proton or sodium gradient. F-type ATPases consist of two structural domains, F(1) containing the extramembraneous catalytic core and F(0) containing the membrane proton channel, linked together by a central stalk and a peripheral stalk. During catalysis, ATP synthesis in the catalytic domain of F(1) is coupled via a rotary mechanism of the central stalk subunits to proton translocation. Its function is as follows. Component of the F(0) channel, it forms part of the peripheral stalk, linking F(1) to F(0). The chain is ATP synthase subunit b from Mycobacterium marinum (strain ATCC BAA-535 / M).